Here is a 212-residue protein sequence, read N- to C-terminus: ATP phosphoribosyltransferase (212 aa).

It belongs to the ATP phosphoribosyltransferase family. Short subfamily. As to quaternary structure, heteromultimer composed of HisG and HisZ subunits.

It is found in the cytoplasm. The catalysed reaction is 1-(5-phospho-beta-D-ribosyl)-ATP + diphosphate = 5-phospho-alpha-D-ribose 1-diphosphate + ATP. Its pathway is amino-acid biosynthesis; L-histidine biosynthesis; L-histidine from 5-phospho-alpha-D-ribose 1-diphosphate: step 1/9. In terms of biological role, catalyzes the condensation of ATP and 5-phosphoribose 1-diphosphate to form N'-(5'-phosphoribosyl)-ATP (PR-ATP). Has a crucial role in the pathway because the rate of histidine biosynthesis seems to be controlled primarily by regulation of HisG enzymatic activity. The chain is ATP phosphoribosyltransferase from Clostridium botulinum (strain Okra / Type B1).